Consider the following 528-residue polypeptide: Purine-cytosine permease FCY21 (528 aa).

At 1–90 (MPQTHEMSLN…DDSILNAASM (90 aa)) the chain is on the cytoplasmic side. Ser43 is modified (phosphoserine). Position 46 is a phosphothreonine (Thr46). Residues 91-111 (WFSANMVLPAYAIGALGPMVF) form a helical membrane-spanning segment. Over 112–118 (DLNFGQS) the chain is Extracellular. The chain crosses the membrane as a helical span at residues 119 to 139 (VFVIIFFNLLGLVSVAFFSVF). Residues 140–161 (GAELGLRQMILSRYLVGNIAAR) lie on the Cytoplasmic side of the membrane. A helical membrane pass occupies residues 162-182 (IFSFINFIACIGWGIVNTVAS). At 183–198 (SQVLNMVNPGHQCPLW) the chain is on the extracellular side. Residues 199–219 (AGCIVIIGATVIVTFFGYGVI) traverse the membrane as a helical segment. Residues 220 to 221 (HA) lie on the Cytoplasmic side of the membrane. The chain crosses the membrane as a helical span at residues 222–242 (YEKWAWVPNFAVFLVIIARLA). Topologically, residues 243–260 (RSKKFVLGEWTSGPTTAG) are extracellular. The helical transmembrane segment at 261–281 (NVLSFGSTVYGFAAGWTTYAA) threads the bilayer. Residues 282-295 (DYTVYMPRKTNKYK) are Cytoplasmic-facing. A helical transmembrane segment spans residues 296–316 (IFFSLVVGLATPLYFTMILGA). Topologically, residues 317-340 (AVAMAAIGDPAWKTYYDENSIGGL) are extracellular. A helical transmembrane segment spans residues 341–361 (TFAVLVPNSVHGFGQFCCVLL). Over 362–393 (SLSTIANNVPNMYTIALSVQATWEPLAKVPRV) the chain is Cytoplasmic. The helical transmembrane segment at 394–414 (IWTLLGNAAALGIAIPACYYF) threads the bilayer. Over 415–416 (ST) the chain is Extracellular. Residues 417-437 (FMNYFMDSIGYYLAIYIAIAC) traverse the membrane as a helical segment. The Cytoplasmic segment spans residues 438 to 460 (SEHFIYRRSFSAYNVDDWDSWER). A helical membrane pass occupies residues 461–481 (LPIGIAGTAALIVGAFGVALG). At 482 to 493 (MCQTYWVGEISR) the chain is on the extracellular side. Residues 494–514 (LIGDYGGDIGFELGLSWAFIV) form a helical membrane-spanning segment. The Cytoplasmic segment spans residues 515–528 (YNIARPFELKYFGR).

Belongs to the purine-cytosine permease (2.A.39) family.

The protein localises to the membrane. Functionally, probable purine-cytosine permease. The protein is Purine-cytosine permease FCY21 (FCY21) of Saccharomyces cerevisiae (strain ATCC 204508 / S288c) (Baker's yeast).